The sequence spans 428 residues: Probable anion transporter 6 (428 aa).

Residues 1–22 (MKFPKRYAIVLLTFMCTNVCYI) form the signal peptide. The next 11 membrane-spanning stretches (helical) occupy residues 47-67 (MILS…GWAA), 74-94 (LVLL…PLDP), 98-118 (ILLV…FPSI), 137-157 (LTTS…PSLV), 164-184 (SVFS…FKFA), 221-241 (ILFS…HYAL), 269-289 (LPYL…DHLI), 301-321 (KLLN…LPLF), 327-347 (AIFC…GFAV), 356-376 (FAGI…IVGV), and 401-421 (TVFF…LIFS).

The protein belongs to the major facilitator superfamily. Sodium/anion cotransporter (TC 2.A.1.14) family.

It localises to the cell membrane. Probable anion transporter. The sequence is that of Probable anion transporter 6 (PHT4;6) from Oryza sativa subsp. japonica (Rice).